The sequence spans 381 residues: Hps1-dma1 cluster transcription factor tfc7 (381 aa).

The zn(2)-C6 fungal-type DNA-binding region spans 10–37; that stretch reads CDHCSATKIKCTQERPQCTRCRALGRDC. Residues 41–88 are disordered; that stretch reads RSLRAGKPPRSSQGLNRKISNAPVLPRQNTPVSNPTSMSSKPEHWPTM. 2 stretches are compositionally biased toward polar residues: residues 50–59 and 67–80; these read RSSQGLNRKI and RQNTPVSNPTSMSS.

The protein resides in the nucleus. In terms of biological role, transcription factor that regulates the expression of the hps1-dma1 gene cluster that probably mediates the biosynthesis a derivative of cyclopiazonic acid (CPA). Further studies are required to whether the CPA-like hps1-dma1 cluster is functional or a non-functional relic reflecting evolution of D.septosporum. The sequence is that of Hps1-dma1 cluster transcription factor tfc7 (tfc7) from Dothistroma septosporum (strain NZE10 / CBS 128990) (Red band needle blight fungus).